Consider the following 235-residue polypeptide: Sugar fermentation stimulation protein homolog (235 aa).

The protein belongs to the SfsA family.

The chain is Sugar fermentation stimulation protein homolog from Nitrosococcus oceani (strain ATCC 19707 / BCRC 17464 / JCM 30415 / NCIMB 11848 / C-107).